A 499-amino-acid chain; its full sequence is Endoglucanase 3 (499 aa).

A signal peptide spans 1-19 (MALLRCLFLLAVLLPHRNA). Residue Asp88 is the Nucleophile of the active site. Residues His416, Asp467, and Glu476 contribute to the active site.

The protein belongs to the glycosyl hydrolase 9 (cellulase E) family. As to expression, expressed in flowers.

Its subcellular location is the secreted. It carries out the reaction Endohydrolysis of (1-&gt;4)-beta-D-glucosidic linkages in cellulose, lichenin and cereal beta-D-glucans.. The chain is Endoglucanase 3 (GLU8) from Oryza sativa subsp. japonica (Rice).